A 213-amino-acid polypeptide reads, in one-letter code: Imidazole glycerol phosphate synthase subunit HisH (213 aa).

The Glutamine amidotransferase type-1 domain maps to 1–212 (MLAILDYKAG…HRYCTEAADA (212 aa)). Catalysis depends on Cys79, which acts as the Nucleophile. Residues His187 and Glu189 contribute to the active site.

As to quaternary structure, heterodimer of HisH and HisF.

It is found in the cytoplasm. It carries out the reaction 5-[(5-phospho-1-deoxy-D-ribulos-1-ylimino)methylamino]-1-(5-phospho-beta-D-ribosyl)imidazole-4-carboxamide + L-glutamine = D-erythro-1-(imidazol-4-yl)glycerol 3-phosphate + 5-amino-1-(5-phospho-beta-D-ribosyl)imidazole-4-carboxamide + L-glutamate + H(+). The catalysed reaction is L-glutamine + H2O = L-glutamate + NH4(+). The protein operates within amino-acid biosynthesis; L-histidine biosynthesis; L-histidine from 5-phospho-alpha-D-ribose 1-diphosphate: step 5/9. Its function is as follows. IGPS catalyzes the conversion of PRFAR and glutamine to IGP, AICAR and glutamate. The HisH subunit catalyzes the hydrolysis of glutamine to glutamate and ammonia as part of the synthesis of IGP and AICAR. The resulting ammonia molecule is channeled to the active site of HisF. This chain is Imidazole glycerol phosphate synthase subunit HisH, found in Nitratidesulfovibrio vulgaris (strain DP4) (Desulfovibrio vulgaris).